The primary structure comprises 228 residues: Thymidine kinase (228 aa).

23–30 provides a ligand contact to ATP; that stretch reads GNIGCGKS. Glu50 functions as the Proton acceptor in the catalytic mechanism. Substrate-binding residues include Tyr68, Gln79, and Phe109. Arg157 is an ATP binding site.

Belongs to the DCK/DGK family.

It carries out the reaction thymidine + ATP = dTMP + ADP + H(+). In Ictaluridae (bullhead catfishes), this protein is Thymidine kinase (TK).